A 307-amino-acid polypeptide reads, in one-letter code: Phospho-N-acetylmuramoyl-pentapeptide-transferase (307 aa).

Helical transmembrane passes span 3 to 23 (IILF…KYWI), 47 to 67 (SGTP…FLFF), 71 to 91 (FFPS…DFKL), 105 to 125 (IFLS…DYKI), 137 to 157 (IFYV…INLT), 162 to 182 (GLAG…NFQF), 186 to 206 (LTLE…FNSH), 210 to 230 (IFMG…LSII), 237 to 257 (LVFL…QVFF), and 285 to 305 (VVWR…ILWN).

This sequence belongs to the glycosyltransferase 4 family. MraY subfamily. Requires Mg(2+) as cofactor.

It is found in the cell inner membrane. The catalysed reaction is UDP-N-acetyl-alpha-D-muramoyl-L-alanyl-gamma-D-glutamyl-meso-2,6-diaminopimeloyl-D-alanyl-D-alanine + di-trans,octa-cis-undecaprenyl phosphate = di-trans,octa-cis-undecaprenyl diphospho-N-acetyl-alpha-D-muramoyl-L-alanyl-D-glutamyl-meso-2,6-diaminopimeloyl-D-alanyl-D-alanine + UMP. The protein operates within cell wall biogenesis; peptidoglycan biosynthesis. Functionally, catalyzes the initial step of the lipid cycle reactions in the biosynthesis of the cell wall peptidoglycan: transfers peptidoglycan precursor phospho-MurNAc-pentapeptide from UDP-MurNAc-pentapeptide onto the lipid carrier undecaprenyl phosphate, yielding undecaprenyl-pyrophosphoryl-MurNAc-pentapeptide, known as lipid I. The sequence is that of Phospho-N-acetylmuramoyl-pentapeptide-transferase from Dictyoglomus turgidum (strain DSM 6724 / Z-1310).